The primary structure comprises 120 residues: Sirohydrochlorin cobaltochelatase (120 aa).

His9 acts as the Proton acceptor in catalysis. His9 serves as a coordination point for Co(2+). Substrate contacts are provided by residues Gln43 and 68-73 (FAAGTH). His73 contributes to the Co(2+) binding site.

Belongs to the CbiX family. CbiXS subfamily. As to quaternary structure, homotetramer; dimer of dimers.

It catalyses the reaction Co-sirohydrochlorin + 2 H(+) = sirohydrochlorin + Co(2+). It functions in the pathway cofactor biosynthesis; adenosylcobalamin biosynthesis; cob(II)yrinate a,c-diamide from sirohydrochlorin (anaerobic route): step 1/10. In terms of biological role, catalyzes the insertion of Co(2+) into sirohydrochlorin as part of the anaerobic pathway to cobalamin biosynthesis. The chain is Sirohydrochlorin cobaltochelatase from Sulfurisphaera tokodaii (strain DSM 16993 / JCM 10545 / NBRC 100140 / 7) (Sulfolobus tokodaii).